Reading from the N-terminus, the 299-residue chain is Aspartate carbamoyltransferase catalytic subunit (299 aa).

Carbamoyl phosphate is bound by residues arginine 54 and threonine 55. Lysine 83 provides a ligand contact to L-aspartate. The carbamoyl phosphate site is built by arginine 104, histidine 132, and glutamine 135. Arginine 165 and arginine 222 together coordinate L-aspartate. The carbamoyl phosphate site is built by leucine 261 and proline 262.

Belongs to the aspartate/ornithine carbamoyltransferase superfamily. ATCase family. As to quaternary structure, heterooligomer of catalytic and regulatory chains.

The catalysed reaction is carbamoyl phosphate + L-aspartate = N-carbamoyl-L-aspartate + phosphate + H(+). The protein operates within pyrimidine metabolism; UMP biosynthesis via de novo pathway; (S)-dihydroorotate from bicarbonate: step 2/3. Functionally, catalyzes the condensation of carbamoyl phosphate and aspartate to form carbamoyl aspartate and inorganic phosphate, the committed step in the de novo pyrimidine nucleotide biosynthesis pathway. This is Aspartate carbamoyltransferase catalytic subunit from Archaeoglobus fulgidus (strain ATCC 49558 / DSM 4304 / JCM 9628 / NBRC 100126 / VC-16).